The chain runs to 343 residues: Nuclear hormone receptor family member nhr-167 (343 aa).

Positions 5-81 form a DNA-binding region, nuclear receptor; the sequence is HQKCAVCGRF…VGMTLPSYLL (77 aa). 2 consecutive NR C4-type zinc fingers follow at residues 8–28 and 45–64; these read CAVC…CNSC and CFRG…CTSC. The region spanning 101–339 is the NR LBD domain; the sequence is THNKRMDSLF…KKLVKDGIEA (239 aa).

This sequence belongs to the nuclear hormone receptor family.

It localises to the nucleus. Its function is as follows. Orphan nuclear receptor. This chain is Nuclear hormone receptor family member nhr-167 (nhr-167), found in Caenorhabditis elegans.